The primary structure comprises 70 residues: DNA gyrase inhibitor YacG (70 aa).

Zn(2+)-binding residues include cysteine 21, cysteine 24, cysteine 36, and cysteine 40.

Belongs to the DNA gyrase inhibitor YacG family. Interacts with GyrB. Zn(2+) serves as cofactor.

Functionally, inhibits all the catalytic activities of DNA gyrase by preventing its interaction with DNA. Acts by binding directly to the C-terminal domain of GyrB, which probably disrupts DNA binding by the gyrase. The sequence is that of DNA gyrase inhibitor YacG from Rhizobium meliloti (strain 1021) (Ensifer meliloti).